A 212-amino-acid chain; its full sequence is Protein GrpE (212 aa).

A disordered region spans residues Met1 to Glu68. Basic and acidic residues predominate over residues Thr9–Leu30. Positions Glu40 to Leu60 are enriched in low complexity.

It belongs to the GrpE family. As to quaternary structure, homodimer.

It is found in the cytoplasm. Its function is as follows. Participates actively in the response to hyperosmotic and heat shock by preventing the aggregation of stress-denatured proteins, in association with DnaK and GrpE. It is the nucleotide exchange factor for DnaK and may function as a thermosensor. Unfolded proteins bind initially to DnaJ; upon interaction with the DnaJ-bound protein, DnaK hydrolyzes its bound ATP, resulting in the formation of a stable complex. GrpE releases ADP from DnaK; ATP binding to DnaK triggers the release of the substrate protein, thus completing the reaction cycle. Several rounds of ATP-dependent interactions between DnaJ, DnaK and GrpE are required for fully efficient folding. This chain is Protein GrpE, found in Leptospira interrogans serogroup Icterohaemorrhagiae serovar copenhageni (strain Fiocruz L1-130).